We begin with the raw amino-acid sequence, 228 residues long: Ribonuclease 3 (228 aa).

An RNase III domain is found at 5 to 127; it reads KDALQDRLGY…LFGAIYLDGG (123 aa). Glutamate 40 is a Mg(2+) binding site. The active site involves aspartate 44. Aspartate 113 and glutamate 116 together coordinate Mg(2+). Residue glutamate 116 is part of the active site. The 71-residue stretch at 154–224 folds into the DRBM domain; it reads DPKTRLQEHL…AEQMLKRLED (71 aa). Residues 200-228 form a disordered region; that stretch reads AEGEAGSRRKAEQQAAEQMLKRLEDKHER. A compositionally biased stretch (basic and acidic residues) spans 218-228; that stretch reads MLKRLEDKHER.

This sequence belongs to the ribonuclease III family. As to quaternary structure, homodimer. Mg(2+) serves as cofactor.

The protein localises to the cytoplasm. The catalysed reaction is Endonucleolytic cleavage to 5'-phosphomonoester.. Its function is as follows. Digests double-stranded RNA. Involved in the processing of primary rRNA transcript to yield the immediate precursors to the large and small rRNAs (23S and 16S). Processes some mRNAs, and tRNAs when they are encoded in the rRNA operon. Processes pre-crRNA and tracrRNA of type II CRISPR loci if present in the organism. This Alkalilimnicola ehrlichii (strain ATCC BAA-1101 / DSM 17681 / MLHE-1) protein is Ribonuclease 3.